An 88-amino-acid polypeptide reads, in one-letter code: MLATDKKQEIIGAYKLHDSDTGSPEVQIAILTERITYLTEHFKTHKKDHHSRRGLLKIVGQRRGLLDYLKKKDVERYRSIIEKLGIRR.

It belongs to the universal ribosomal protein uS15 family. Part of the 30S ribosomal subunit. Forms a bridge to the 50S subunit in the 70S ribosome, contacting the 23S rRNA.

Functionally, one of the primary rRNA binding proteins, it binds directly to 16S rRNA where it helps nucleate assembly of the platform of the 30S subunit by binding and bridging several RNA helices of the 16S rRNA. Forms an intersubunit bridge (bridge B4) with the 23S rRNA of the 50S subunit in the ribosome. The protein is Small ribosomal subunit protein uS15 of Geotalea daltonii (strain DSM 22248 / JCM 15807 / FRC-32) (Geobacter daltonii).